We begin with the raw amino-acid sequence, 711 residues long: Polyribonucleotide nucleotidyltransferase (711 aa).

Mg(2+) is bound by residues Asp489 and Asp495. A KH domain is found at 556–615 (PRIHTIKISPDKIKDVIGKGGSVIRALTEETGTTIEIEDDGTVKIAATDGEKAKHAIRRI). The region spanning 625–693 (GRIYNGKVTR…RQGRVRLSIK (69 aa)) is the S1 motif domain.

This sequence belongs to the polyribonucleotide nucleotidyltransferase family. As to quaternary structure, component of the RNA degradosome, which is a multiprotein complex involved in RNA processing and mRNA degradation. Mg(2+) is required as a cofactor.

It is found in the cytoplasm. The enzyme catalyses RNA(n+1) + phosphate = RNA(n) + a ribonucleoside 5'-diphosphate. Functionally, involved in mRNA degradation. Catalyzes the phosphorolysis of single-stranded polyribonucleotides processively in the 3'- to 5'-direction. This Cronobacter sakazakii (strain ATCC BAA-894) (Enterobacter sakazakii) protein is Polyribonucleotide nucleotidyltransferase.